The following is a 272-amino-acid chain: Putative phosphoenolpyruvate synthase regulatory protein (272 aa).

An ADP-binding site is contributed by 152–159; that stretch reads GVSRCGKT.

Belongs to the pyruvate, phosphate/water dikinase regulatory protein family. PSRP subfamily.

The catalysed reaction is [pyruvate, water dikinase] + ADP = [pyruvate, water dikinase]-phosphate + AMP + H(+). The enzyme catalyses [pyruvate, water dikinase]-phosphate + phosphate + H(+) = [pyruvate, water dikinase] + diphosphate. In terms of biological role, bifunctional serine/threonine kinase and phosphorylase involved in the regulation of the phosphoenolpyruvate synthase (PEPS) by catalyzing its phosphorylation/dephosphorylation. The protein is Putative phosphoenolpyruvate synthase regulatory protein of Pseudomonas fluorescens (strain ATCC BAA-477 / NRRL B-23932 / Pf-5).